Here is a 236-residue protein sequence, read N- to C-terminus: Small ribosomal subunit protein uS5 (236 aa).

Residues 61-124 enclose the S5 DRBM domain; the sequence is ENQEILDIAL…NYAKLNIIEI (64 aa).

It belongs to the universal ribosomal protein uS5 family. Part of the 30S ribosomal subunit. Contacts protein S4.

Functionally, with S4 and S12 plays an important role in translational accuracy. This chain is Small ribosomal subunit protein uS5, found in Pyrococcus abyssi (strain GE5 / Orsay).